Here is an 83-residue protein sequence, read N- to C-terminus: Mu-theraphotoxin-Hhn2m (83 aa).

The first 21 residues, 1-21, serve as a signal peptide directing secretion; that stretch reads MKASMFLALAGLVLLFVVGYA. A propeptide spanning residues 22-48 is cleaved from the precursor; the sequence is SESEEKEFPIELLSKIFAVDVFKGEER. 3 cysteine pairs are disulfide-bonded: C50–C65, C57–C70, and C64–C77. L81 carries the post-translational modification Leucine amide.

It belongs to the neurotoxin 10 (Hwtx-1) family. 15 (Hntx-3) subfamily. As to quaternary structure, monomer. As to expression, expressed by the venom gland.

It is found in the secreted. In terms of biological role, lethal neurotoxin. Selectively blocks tetrodotoxin-sensitive voltage-gated sodium channels (Nav). Does not affect tetrodotoxin-resistant voltage-gated sodium channels or calcium channels. This Cyriopagopus hainanus (Chinese bird spider) protein is Mu-theraphotoxin-Hhn2m.